A 545-amino-acid chain; its full sequence is Glucose-6-phosphate isomerase (545 aa).

Glu-351 serves as the catalytic Proton donor. Catalysis depends on residues His-382 and Lys-510.

This sequence belongs to the GPI family.

The protein localises to the cytoplasm. The catalysed reaction is alpha-D-glucose 6-phosphate = beta-D-fructose 6-phosphate. It participates in carbohydrate biosynthesis; gluconeogenesis. It functions in the pathway carbohydrate degradation; glycolysis; D-glyceraldehyde 3-phosphate and glycerone phosphate from D-glucose: step 2/4. Functionally, catalyzes the reversible isomerization of glucose-6-phosphate to fructose-6-phosphate. In Shewanella amazonensis (strain ATCC BAA-1098 / SB2B), this protein is Glucose-6-phosphate isomerase.